The chain runs to 185 residues: Large ribosomal subunit protein uL22 (185 aa).

Residues 157–185 (VAAPSPEEDAPKKKQSKKKMARQKLMQRD) are disordered. The span at 169 to 178 (KKQSKKKMAR) shows a compositional bias: basic residues.

The protein belongs to the universal ribosomal protein uL22 family.

The polypeptide is Large ribosomal subunit protein uL22 (RpL17) (Ixodes scapularis (Black-legged tick)).